Consider the following 158-residue polypeptide: MEIDGFQQLDLEKSVPSKKTTPKRIIHFVDGDIMEEYSTEEEEEEEKEEQSTNSTLDPSKLSWGPYLRFWAGRIASTSFSTCEFLGGRFAVFFGLTQPKYQYVLNEFYRIQNKKSDNKSERRGSKAQAAEVPNEKCHLEAGVQEYGTIQQDVTEAIPQ.

A compositionally biased stretch (acidic residues) spans 36–48; that stretch reads EYSTEEEEEEEKE. A disordered region spans residues 36–59; that stretch reads EYSTEEEEEEEKEEQSTNSTLDPS.

It belongs to the FAM177 family.

In Homo sapiens (Human), this protein is Protein FAM177B (FAM177B).